We begin with the raw amino-acid sequence, 469 residues long: Protein nucleotidyltransferase YdiU (469 aa).

ATP contacts are provided by G80, G82, R83, K103, D115, G116, R166, and R173. The active-site Proton acceptor is the D243. Residues N244 and D253 each contribute to the Mg(2+) site. ATP is bound at residue D253.

It belongs to the SELO family. Mg(2+) is required as a cofactor. The cofactor is Mn(2+).

It catalyses the reaction L-seryl-[protein] + ATP = 3-O-(5'-adenylyl)-L-seryl-[protein] + diphosphate. The catalysed reaction is L-threonyl-[protein] + ATP = 3-O-(5'-adenylyl)-L-threonyl-[protein] + diphosphate. The enzyme catalyses L-tyrosyl-[protein] + ATP = O-(5'-adenylyl)-L-tyrosyl-[protein] + diphosphate. It carries out the reaction L-histidyl-[protein] + UTP = N(tele)-(5'-uridylyl)-L-histidyl-[protein] + diphosphate. It catalyses the reaction L-seryl-[protein] + UTP = O-(5'-uridylyl)-L-seryl-[protein] + diphosphate. The catalysed reaction is L-tyrosyl-[protein] + UTP = O-(5'-uridylyl)-L-tyrosyl-[protein] + diphosphate. Its function is as follows. Nucleotidyltransferase involved in the post-translational modification of proteins. It can catalyze the addition of adenosine monophosphate (AMP) or uridine monophosphate (UMP) to a protein, resulting in modifications known as AMPylation and UMPylation. The chain is Protein nucleotidyltransferase YdiU from Pseudoalteromonas translucida (strain TAC 125).